Consider the following 31-residue polypeptide: Protamine-1B (31 aa).

Positions M1–R31 are disordered.

Testis.

It is found in the nucleus. The protein localises to the chromosome. Protamines substitute for histones in the chromatin of sperm during the haploid phase of spermatogenesis. They compact sperm DNA into a highly condensed, stable and inactive complex. The sequence is that of Protamine-1B from Oncorhynchus mykiss (Rainbow trout).